The primary structure comprises 329 residues: Ankyrin repeat and SOCS box protein 5 (329 aa).

ANK repeat units follow at residues A69 to A98, D102 to A131, D135 to L164, C167 to Q196, H200 to K229, and Y232 to A261. One can recognise an SOCS box domain in the interval A278–R329.

Belongs to the ankyrin SOCS box (ASB) family.

The protein operates within protein modification; protein ubiquitination. In terms of biological role, may be a substrate-recognition component of a SCF-like ECS (Elongin-Cullin-SOCS-box protein) E3 ubiquitin-protein ligase complex which mediates the ubiquitination and subsequent proteasomal degradation of target proteins. May play a role in the initiation of arteriogenesis. This is Ankyrin repeat and SOCS box protein 5 (Asb5) from Mus musculus (Mouse).